Reading from the N-terminus, the 243-residue chain is MKNILSWMLMFAVALPILGCDNNGGSQTSAMGKDMVEDSVLTDNQKLSRTFGHLLARQLSSTEDFTLDLTEVIKGMQSEIEGKSAPLTDSEYETQMALVQKASFEKKCSENLASAEKFLKENKDKEGVIELEPNKLQYRIVKEGTGRVLTGKPNALLHYTGSFINGKVFDTSEKNKDPILLPLTKVISGFSQGMQGMREGEVRVLYIHPDLAYGTSGQLPPNSLLIFEVKLIEANDDNVSVAE.

The N-terminal stretch at 1-14 is a signal peptide; it reads MKNILSWMLMFAVA. Positions 152 to 235 constitute a PPIase FKBP-type domain; that stretch reads KPNALLHYTG…IFEVKLIEAN (84 aa).

Belongs to the FKBP-type PPIase family.

It localises to the cell outer membrane. It carries out the reaction [protein]-peptidylproline (omega=180) = [protein]-peptidylproline (omega=0). Its function is as follows. PPIases accelerate the folding of proteins. The chain is Peptidyl-prolyl cis-trans isomerase Mip (mip) from Chlamydia muridarum (strain MoPn / Nigg).